A 124-amino-acid polypeptide reads, in one-letter code: SLIQFEKMIKKMTGKEPVVSYAFYGCYCGSGGQGKPKDATDRCCFVHDCCYEKVTGCDPKWDDYTYSWKDGDIVCGGDDPCKKEICECDRAAAICFRDNLNTYNDRKYWAFGAKNCPQEESEPC.

7 cysteine pairs are disulfide-bonded: Cys-26/Cys-116, Cys-28/Cys-44, Cys-43/Cys-95, Cys-49/Cys-124, Cys-50/Cys-88, Cys-57/Cys-81, and Cys-75/Cys-86. 3 residues coordinate Ca(2+): Tyr-27, Gly-29, and Gly-31. His-47 is an active-site residue. Asp-48 contributes to the Ca(2+) binding site. The active site involves Asp-89.

Belongs to the phospholipase A2 family. Group II subfamily. D49 sub-subfamily. Requires Ca(2+) as cofactor. In terms of tissue distribution, expressed by the venom gland.

It is found in the secreted. It catalyses the reaction a 1,2-diacyl-sn-glycero-3-phosphocholine + H2O = a 1-acyl-sn-glycero-3-phosphocholine + a fatty acid + H(+). Functionally, PLA2 catalyzes the calcium-dependent hydrolysis of the 2-acyl groups in 3-sn-phosphoglycerides. This chain is Acidic phospholipase A2 BA1, found in Gloydius halys (Chinese water mocassin).